We begin with the raw amino-acid sequence, 433 residues long: Transcobalamin-1 (433 aa).

Positions 1–23 (MRQSHQLPLVGLLLFSFIPSQLC) are cleaved as a signal peptide. Residues 24-310 (EICEVSEENY…DINKDSSCVS (287 aa)) form a globular N-terminal alpha domain region. 3 disulfide bridges follow: C26-C265, C105-C308, and C155-C197. A cyanocob(III)alamin-binding site is contributed by 142-146 (TNYYQ). N-linked (GlcNAc...) asparagine glycosylation is present at N160. D186 contacts cyanocob(III)alamin. N216 is a glycosylation site (N-linked (GlcNAc...) asparagine). Residues N240 and Q289 each contribute to the cyanocob(III)alamin site. Residues 311 to 332 (ASGNFNISADEPITVTPPDSQS) are flexible linker. 6 N-linked (GlcNAc...) asparagine glycosylation sites follow: N316, N337, N343, N349, N354, and N369. Residues 333 to 433 (YISVNYSVRI…ENLEVRWSKY (101 aa)) form a globular C-terminal beta domain region. 385-386 (YI) is a binding site for cyanocob(III)alamin. A disulfide bond links C388 and C393. Residues 402–404 (WEL), L411, and Y433 each bind cyanocob(III)alamin.

This sequence belongs to the eukaryotic cobalamin transport proteins family. Post-translationally, contains about 30% carbohydrates. In terms of tissue distribution, produced by the salivary glands of the oral cavity, in response to ingestion of food. Major constituent of secondary granules in neutrophils.

The protein resides in the secreted. Binds vitamin B12 with femtomolar affinity and protects it from the acidic environment of the stomach. The protein is Transcobalamin-1 (TCN1) of Homo sapiens (Human).